The sequence spans 216 residues: MMNTIIGLILAYLLGSIPTGLWIGQIFFKKNLREYGSGNTGTTNTFRILGKTAGTATFAIDFLKGTAATLLPFFLHIEGVSPLVFGLLAVIGHTFPIFAGFKGGKAVATSAGVVLGFSPAFFVYLIVIFASILYLGSMISLASVLSAVIAILSALLFPLVGFILPSYDLFFTLIIIALALIIILRHKDNIQRIKQKKENLIPWGLNITHQNPEAKK.

5 consecutive transmembrane segments (helical) span residues 4–24, 71–91, 113–133, 144–164, and 165–185; these read TIIG…LWIG, LPFF…LAVI, VVLG…ASIL, VLSA…GFIL, and PSYD…IILR.

Belongs to the PlsY family. In terms of assembly, probably interacts with PlsX.

The protein localises to the cell membrane. The enzyme catalyses an acyl phosphate + sn-glycerol 3-phosphate = a 1-acyl-sn-glycero-3-phosphate + phosphate. Its pathway is lipid metabolism; phospholipid metabolism. Functionally, catalyzes the transfer of an acyl group from acyl-phosphate (acyl-PO(4)) to glycerol-3-phosphate (G3P) to form lysophosphatidic acid (LPA). This enzyme utilizes acyl-phosphate as fatty acyl donor, but not acyl-CoA or acyl-ACP. The sequence is that of Glycerol-3-phosphate acyltransferase from Streptococcus sanguinis (strain SK36).